Reading from the N-terminus, the 330-residue chain is 7,8-didemethyl-8-hydroxy-5-deazariboflavin synthase (330 aa).

In terms of domain architecture, Radical SAM core spans 5–245; the sequence is VTFSRNVFIP…SDVAVQVAPN (241 aa). The [4Fe-4S] cluster site is built by Cys19, Cys23, and Cys26.

The protein belongs to the radical SAM superfamily. CofG family. As to quaternary structure, consists of two subunits, CofG and CofH. The cofactor is [4Fe-4S] cluster.

The enzyme catalyses 5-amino-5-(4-hydroxybenzyl)-6-(D-ribitylimino)-5,6-dihydrouracil + S-adenosyl-L-methionine = 7,8-didemethyl-8-hydroxy-5-deazariboflavin + 5'-deoxyadenosine + L-methionine + NH4(+) + H(+). It participates in cofactor biosynthesis; coenzyme F0 biosynthesis. Catalyzes the radical-mediated synthesis of 7,8-didemethyl-8-hydroxy-5-deazariboflavin from 5-amino-5-(4-hydroxybenzyl)-6-(D-ribitylimino)-5,6-dihydrouracil. The sequence is that of 7,8-didemethyl-8-hydroxy-5-deazariboflavin synthase from Methanococcoides burtonii (strain DSM 6242 / NBRC 107633 / OCM 468 / ACE-M).